We begin with the raw amino-acid sequence, 209 residues long: Ras-like protein (209 aa).

10 to 17 is a GTP binding site; that stretch reads GGGLVGKS. The Effector region motif lies at 55–63; that stretch reads YDPTVEDSR. Residue T58 is modified to Phosphothreonine. Residues 79 to 83 and 140 to 143 contribute to the GTP site; these read DTAGQ and NKAD. C206 is modified (cysteine methyl ester). A lipid anchor (S-geranylgeranyl cysteine) is attached at C206. Positions 207 to 209 are cleaved as a propeptide — removed in mature form; it reads LII.

Belongs to the small GTPase superfamily. Ras family. Phosphorylated in the presence of insulin.

Its subcellular location is the cell membrane. It catalyses the reaction GTP + H2O = GDP + phosphate + H(+). Its activity is regulated as follows. Alternates between an inactive form bound to GDP and an active form bound to GTP. Activated by a guanine nucleotide-exchange factor (GEF) and inactivated by a GTPase-activating protein (GAP). In terms of biological role, this protein is activated by the insulin/insulin (insulin-like)-receptor system. This transition enables the ras protein to interact with the lectin-receptor/lectin complex, a process which ultimately lead to an initiation of an intra-cellular signal-transduction chain. The polypeptide is Ras-like protein (Geodia cydonium (Sponge)).